We begin with the raw amino-acid sequence, 91 residues long: Putative transmembrane protein encoded by LINC00862 (91 aa).

The helical transmembrane segment at 49–69 (IMALILMPSLHCFGNILILLF) threads the bilayer.

Its subcellular location is the membrane. The polypeptide is Putative transmembrane protein encoded by LINC00862 (LINC00862) (Homo sapiens (Human)).